A 1342-amino-acid polypeptide reads, in one-letter code: Restriction of telomere capping protein 1 (1342 aa).

The segment at 1–39 (MSLSPHVENASIPKGSTPIPKNRNVSSIGKGEFLGSSSS) is disordered. 6 WD repeats span residues 207–248 (NKFS…SIDN), 256–296 (EHTR…SKSS), 305–342 (TASD…YKFA), 367–406 (AHTG…NAAE), 439–486 (NTDY…IPKH), and 489–527 (LSET…TVLE). Disordered regions lie at residues 559–593 (PELQ…IGGI), 600–619 (TGLT…GPTF), 630–651 (ASSF…ENRE), 736–766 (KNAT…DDDD), and 788–831 (LMNE…DRSR). Residues 630–644 (ASSFNSSSASLTSLT) show a composition bias toward low complexity. Over residues 753–766 (DDGDDDDDDDDDDD) the composition is skewed to acidic residues. A compositionally biased stretch (low complexity) spans 815 to 824 (SSISSISASR). A WD 7 repeat occupies 844–884 (KIQTLVDLISIATHNASVYLSIDDLTNFKIWILIRDSLLWD). Disordered regions lie at residues 942–963 (AFRA…KLKE) and 1014–1047 (DEHE…PILQ). 2 stretches are compositionally biased toward basic and acidic residues: residues 952–963 (DAEKKPVSKLKE) and 1016–1028 (HEHQ…HDSP). Serine 1037, serine 1081, serine 1088, serine 1090, serine 1124, and serine 1134 each carry phosphoserine. 2 WD repeats span residues 1130-1170 (SRPD…KQLY) and 1217-1256 (LFGI…LITN). The RING-type; degenerate zinc-finger motif lies at 1294-1336 (CVLCERPLKKLTMVILPCGHEGHFQCIQEWFLDENEQECPGGC).

This sequence belongs to the WD repeat RTC1 family.

Its subcellular location is the vacuole. In terms of biological role, may be involved in a process influencing telomere capping. This is Restriction of telomere capping protein 1 (RTC1) from Saccharomyces cerevisiae (strain RM11-1a) (Baker's yeast).